The following is a 262-amino-acid chain: Ubiquinone biosynthesis protein COQ4, mitochondrial (262 aa).

Residues H154, D155, H158, and E170 each coordinate Zn(2+). Positions 243-262 are disordered; that stretch reads LGIEQPPDLRQMKKDMAKKK. Basic and acidic residues predominate over residues 252–262; sequence RQMKKDMAKKK.

This sequence belongs to the COQ4 family. As to quaternary structure, component of a multi-subunit COQ enzyme complex, composed of at least COQ3, COQ4, COQ5, COQ6, COQ7 and COQ9. It depends on Zn(2+) as a cofactor.

It is found in the mitochondrion inner membrane. The catalysed reaction is a 4-hydroxy-3-methoxy-5-(all-trans-polyprenyl)benzoate + H(+) = a 2-methoxy-6-(all-trans-polyprenyl)phenol + CO2. Its pathway is cofactor biosynthesis; ubiquinone biosynthesis. Its function is as follows. Lyase that catalyzes the C1-decarboxylation of 4-hydroxy-3-methoxy-5-(all-trans-polyprenyl)benzoic acid into 2-methoxy-6-(all-trans-polyprenyl)phenol during ubiquinone biosynthesis. This chain is Ubiquinone biosynthesis protein COQ4, mitochondrial, found in Yarrowia lipolytica (strain CLIB 122 / E 150) (Yeast).